A 221-amino-acid chain; its full sequence is Epididymal secretory glutathione peroxidase (221 aa).

The N-terminal stretch at 1-21 is a signal peptide; it reads MTAWLGASYVLPILLVSFVQT. Cys73 is an active-site residue.

The protein belongs to the glutathione peroxidase family. In terms of tissue distribution, epididymis.

It is found in the secreted. The enzyme catalyses 2 glutathione + H2O2 = glutathione disulfide + 2 H2O. Its function is as follows. Protects cells and enzymes from oxidative damage, by catalyzing the reduction of hydrogen peroxide, lipid peroxides and organic hydroperoxide, by glutathione. May constitute a glutathione peroxidase-like protective system against peroxide damage in sperm membrane lipids. In Canis lupus familiaris (Dog), this protein is Epididymal secretory glutathione peroxidase (GPX5).